Reading from the N-terminus, the 232-residue chain is 2,3,4,5-tetrahydropyridine-2,6-dicarboxylate N-acetyltransferase (232 aa).

This sequence belongs to the transferase hexapeptide repeat family. DapH subfamily.

The catalysed reaction is (S)-2,3,4,5-tetrahydrodipicolinate + acetyl-CoA + H2O = L-2-acetamido-6-oxoheptanedioate + CoA. It participates in amino-acid biosynthesis; L-lysine biosynthesis via DAP pathway; LL-2,6-diaminopimelate from (S)-tetrahydrodipicolinate (acetylase route): step 1/3. Functionally, catalyzes the transfer of an acetyl group from acetyl-CoA to tetrahydrodipicolinate. This chain is 2,3,4,5-tetrahydropyridine-2,6-dicarboxylate N-acetyltransferase, found in Kosmotoga olearia (strain ATCC BAA-1733 / DSM 21960 / TBF 19.5.1).